The sequence spans 297 residues: MTGFGATPDFNEGSKINASKNQQDEGKMFIGGLSWDTSKKDLTEYLSRFGEVVDCTIKTDPVTGRSRGFGFVLFKDAVSVDKVLETKEHKLDGKLIDPKRAKALKGKEPPKKVFVGGLSPETTEEQIKQYFGGFGEIENIELPMDTKTNERRGFCFVTYTGEEPVKKLLESRFHQIGTGKCEIKVAQPKEVYRQQQQKQQKGGRGAATGRGGARGRGRGQGWNQGYSNYYDQNYGSYGNNGSYADQGYNNSYSGYDYSGYNYGSYGYNQGYTDYSGQQSTYGKARGGGNHQNNYQPY.

The disordered stretch occupies residues 1–21 (MTGFGATPDFNEGSKINASKN). 2 consecutive RRM domains span residues 26–108 (GKMF…KGKE) and 111–190 (KKVF…QPKE). Residues 192-224 (YRQQQQKQQKGGRGAATGRGGARGRGRGQGWNQ) are disordered. Residues 202 to 222 (GGRGAATGRGGARGRGRGQGW) are compositionally biased toward gly residues.

Its subcellular location is the nucleus. It is found in the cytoplasm. Its function is as follows. Acts as a transcriptional regulator. Binds DNA and RNA. The chain is Heterogeneous nuclear ribonucleoprotein D-like (hnrnpdl) from Xenopus tropicalis (Western clawed frog).